A 115-amino-acid chain; its full sequence is Xenovulene A biosynthesis cluster protein asL2 (115 aa).

Functionally, part of the gene cluster that mediates the biosynthesis of xenovulene A, an unusual meroterpenoid that has potent inhibitory effects on the human gamma-aminobutyrate A (GABAA) benzodiazepine receptor. The first step of xenovulene A biosynthesis is the biosynthesis of 3-methylorcinaldehyde performed by the non-reducing polyketide synthase aspks1. The salicylate hydroxylase asL1 then catalyzes the oxidative dearomatization of 3-methylorcinaldehyde to yield a dearomatized hydroxycyclohexadione. The 2-oxoglutarate-dependent dioxygenase asL3 further catalyzes the oxidative ring expansion to provide the first tropolone metabolite. The cytochrome P450 monooxygenase asR2 allows the synthesis of tropolone hemiacetal. In parallel, a previously unrecognised class of terpene cyclase, asR6, produces alpha-humulene from farnesylpyrophosphate (FPP). The putative Diels-Alderase asR5 probably catalyzes the formation of the tropolone-humulene skeleton by linking humulene and the polyketide moiety. Oxidative-ring contractions catalyzed by asL4 and asL6 then processively remove carbon atoms from the polyketide to yield xenovulene A. The polypeptide is Xenovulene A biosynthesis cluster protein asL2 (Sarocladium schorii (Acremonium strictum (strain IMI 501407))).